The sequence spans 65 residues: Large ribosomal subunit protein bL35 (65 aa).

This sequence belongs to the bacterial ribosomal protein bL35 family.

The sequence is that of Large ribosomal subunit protein bL35 from Acaryochloris marina (strain MBIC 11017).